The chain runs to 296 residues: Cytidine deaminase (296 aa).

2 consecutive CMP/dCMP-type deaminase domains span residues 47-167 (ELNE…FGPS) and 186-296 (DSND…VEPE). Residue 88–90 (NIE) coordinates substrate. Residue histidine 101 participates in Zn(2+) binding. Glutamate 103 serves as the catalytic Proton donor. The Zn(2+) site is built by cysteine 128 and cysteine 131.

It belongs to the cytidine and deoxycytidylate deaminase family. In terms of assembly, homodimer. Zn(2+) is required as a cofactor.

It catalyses the reaction cytidine + H2O + H(+) = uridine + NH4(+). The enzyme catalyses 2'-deoxycytidine + H2O + H(+) = 2'-deoxyuridine + NH4(+). In terms of biological role, this enzyme scavenges exogenous and endogenous cytidine and 2'-deoxycytidine for UMP synthesis. In Shewanella halifaxensis (strain HAW-EB4), this protein is Cytidine deaminase.